We begin with the raw amino-acid sequence, 711 residues long: F-box only protein 34 (711 aa).

Disordered stretches follow at residues 1 to 36, 249 to 271, 337 to 372, and 494 to 529; these read MHLKPYWKLQKKEHPPEVSRETQRTPMNHQKAVNDE, SESYSAPGACEEPTERGNLEVGE, DTQVNPVGSVSVDCGPSRADRCSPKEDQAWDGASQD, and YSQLNESTTKESSEASQLEDAAGGDSASEEKSGSAE. The span at 10–23 shows a compositional bias: basic and acidic residues; that stretch reads QKKEHPPEVSRETQ. The segment covering 354–364 has biased composition (basic and acidic residues); it reads RADRCSPKEDQ. The F-box domain occupies 572 to 624; that stretch reads QQYMAFLPHHIMVKIFRLLPTKSLVALKCTCCYFKFIIEYYNIRPADSRWVRD.

Directly interacts with SKP1 and CUL1.

Substrate-recognition component of the SCF (SKP1-CUL1-F-box protein)-type E3 ubiquitin ligase complex. This chain is F-box only protein 34 (FBXO34), found in Homo sapiens (Human).